The primary structure comprises 589 residues: Parathyroid hormone/parathyroid hormone-related peptide receptor (589 aa).

The signal sequence occupies residues 1–28 (MGAARIAPGLALLLCCPVLSSAYALVDA). The Extracellular segment spans residues 29 to 188 (DDVMTKEEQI…REREVFDRLG (160 aa)). 3 disulfide bridges follow: Cys48-Cys117, Cys108-Cys148, and Cys131-Cys170. Positions 64–105 (ESDKGWASASTSGKPKKEKPSGKLHPESEEDKEVPTGSRPRG) are disordered. The segment covering 81–90 (EKPSGKLHPE) has biased composition (basic and acidic residues). Asn151, Asn161, Asn166, and Asn176 each carry an N-linked (GlcNAc...) asparagine glycan. Residues 189–209 (MIYTVGYSVSLASLTVAVLIL) traverse the membrane as a helical segment. Residues 210-223 (AYFRRLHCTRNYIH) lie on the Cytoplasmic side of the membrane. Residues 224 to 244 (MHLFLSFMLRAVSIFVKDAVL) form a helical membrane-spanning segment. Topologically, residues 245 to 294 (YSGTALDEAERLTEEELRAIAQAPPPPAAAAGYVGCRVAVTFFLYFLATN) are extracellular. A helical membrane pass occupies residues 295–315 (YYWILVEGLYLHSLIFMAFFS). Residues 316 to 318 (EKK) lie on the Cytoplasmic side of the membrane. Residues 319-339 (YLWGFTVFGWGLPAIFVAVWV) form a helical membrane-spanning segment. Over 340-360 (SVRATLANTGCWDLSSGNKKW) the chain is Extracellular. A helical transmembrane segment spans residues 361–381 (IIQVPILASIVLNFILFINIV). The Cytoplasmic portion of the chain corresponds to 382-404 (RVLATKLRETNAGRCDTRQQYRK). A helical transmembrane segment spans residues 405 to 425 (LLKSTLVLMPLFGVHYIVFMA). Residues 426-439 (TPYTEVSGTLWQVQ) are Extracellular-facing. Residues 440-460 (MHYEMLFNSFQGFFVAIIYCF) traverse the membrane as a helical segment. Over 461–589 (CNGEVQAEIK…LLQEEWETVM (129 aa)) the chain is Cytoplasmic. The short motif at 473–476 (WSRW) is the Important for interaction with G proteins element. The segment at 524 to 549 (AATTNGHPPLPGHTKSGSPALQATPP) is disordered. Thr547 carries the post-translational modification Phosphothreonine.

The protein belongs to the G-protein coupled receptor 2 family. Homodimer in the absence of bound ligand. Peptide hormone binding leads to dissociation of the homodimer. N-glycosylated.

It is found in the cell membrane. Its function is as follows. G-protein-coupled receptor for parathyroid hormone (PTH) and for parathyroid hormone-related peptide (PTHLH). Ligand binding causes a conformation change that triggers signaling via guanine nucleotide-binding proteins (G proteins) and modulates the activity of downstream effectors, such as adenylate cyclase (cAMP). PTH1R is coupled to G(s) G alpha proteins and mediates activation of adenylate cyclase activity. PTHLH dissociates from PTH1R more rapidly than PTH; as consequence, the cAMP response induced by PTHLH decays faster than the response induced by PTH. The chain is Parathyroid hormone/parathyroid hormone-related peptide receptor (PTH1R) from Bos taurus (Bovine).